The sequence spans 439 residues: UDP-N-acetylmuramoylalanine--D-glutamate ligase (439 aa).

116-122 (GSNGKTT) is an ATP binding site.

Belongs to the MurCDEF family.

It is found in the cytoplasm. The enzyme catalyses UDP-N-acetyl-alpha-D-muramoyl-L-alanine + D-glutamate + ATP = UDP-N-acetyl-alpha-D-muramoyl-L-alanyl-D-glutamate + ADP + phosphate + H(+). It participates in cell wall biogenesis; peptidoglycan biosynthesis. In terms of biological role, cell wall formation. Catalyzes the addition of glutamate to the nucleotide precursor UDP-N-acetylmuramoyl-L-alanine (UMA). The chain is UDP-N-acetylmuramoylalanine--D-glutamate ligase from Shewanella oneidensis (strain ATCC 700550 / JCM 31522 / CIP 106686 / LMG 19005 / NCIMB 14063 / MR-1).